We begin with the raw amino-acid sequence, 212 residues long: VDNEAIYDICRRNLGIERPGYTNLNRLIAHVVSSITASLRFDGSLNVDLNEFQTNLVPYPRIHFPLVTYAPVISAAKAVHEANSVSEITNACFEPNNQMVKCDPRNGKYMATCLLYRGDVVTKDVNAAVAAVRTKRTIQFVDWCPTGFKLGVCYQPPQHVPHGDLAKVDRAVCMLSNTTSIAEAWPRLDHKFDLMYSKRAFVHWYVGEGMEE.

Positions 3 and 25 each coordinate GTP. Glutamate 51 is a catalytic residue.

This sequence belongs to the tubulin family. As to quaternary structure, dimer of alpha and beta chains. A typical microtubule is a hollow water-filled tube with an outer diameter of 25 nm and an inner diameter of 15 nM. Alpha-beta heterodimers associate head-to-tail to form protofilaments running lengthwise along the microtubule wall with the beta-tubulin subunit facing the microtubule plus end conferring a structural polarity. Microtubules usually have 13 protofilaments but different protofilament numbers can be found in some organisms and specialized cells. It depends on Mg(2+) as a cofactor.

The protein localises to the cytoplasm. It is found in the cytoskeleton. The enzyme catalyses GTP + H2O = GDP + phosphate + H(+). Its function is as follows. Tubulin is the major constituent of microtubules, a cylinder consisting of laterally associated linear protofilaments composed of alpha- and beta-tubulin heterodimers. Microtubules grow by the addition of GTP-tubulin dimers to the microtubule end, where a stabilizing cap forms. Below the cap, tubulin dimers are in GDP-bound state, owing to GTPase activity of alpha-tubulin. The protein is Tubulin alpha chain (TUB-A) of Pneumocystis carinii.